The following is a 144-amino-acid chain: Large ribosomal subunit protein uL16 (144 aa).

This sequence belongs to the universal ribosomal protein uL16 family. Part of the 50S ribosomal subunit.

Functionally, binds 23S rRNA and is also seen to make contacts with the A and possibly P site tRNAs. In Clostridium botulinum (strain Alaska E43 / Type E3), this protein is Large ribosomal subunit protein uL16.